The following is a 249-amino-acid chain: Ribosomal RNA small subunit methyltransferase J (249 aa).

Residues 99-100 (RD), 115-116 (ER), 151-152 (SS), and D169 each bind S-adenosyl-L-methionine.

Belongs to the methyltransferase superfamily. RsmJ family.

It localises to the cytoplasm. It carries out the reaction guanosine(1516) in 16S rRNA + S-adenosyl-L-methionine = N(2)-methylguanosine(1516) in 16S rRNA + S-adenosyl-L-homocysteine + H(+). Functionally, specifically methylates the guanosine in position 1516 of 16S rRNA. The chain is Ribosomal RNA small subunit methyltransferase J from Shewanella oneidensis (strain ATCC 700550 / JCM 31522 / CIP 106686 / LMG 19005 / NCIMB 14063 / MR-1).